A 376-amino-acid polypeptide reads, in one-letter code: UPF0754 membrane protein BH1148 (376 aa).

2 helical membrane passes run 3 to 23 (LILFMIVIGAVIGGVTNSLAI) and 355 to 375 (YLGALLGGGIGLVQSLIILLI).

Belongs to the UPF0754 family.

The protein resides in the cell membrane. The protein is UPF0754 membrane protein BH1148 of Halalkalibacterium halodurans (strain ATCC BAA-125 / DSM 18197 / FERM 7344 / JCM 9153 / C-125) (Bacillus halodurans).